A 516-amino-acid chain; its full sequence is Propionyl-CoA carboxylase, carboxyltransferase subunit (516 aa).

Residues 1–32 form a disordered region; sequence MTMEDRIDELREKREEALKGGGEDRIASQHDK. The CoA carboxyltransferase N-terminal domain maps to 3-259; the sequence is MEDRIDELRE…NNVEDPPRVE (257 aa). Residues 263–509 enclose the CoA carboxyltransferase C-terminal domain; it reads DPERVADELE…KSKRKSQPDK (247 aa).

It belongs to the AccD/PCCB family. As to quaternary structure, the propionyl coenzyme A carboxylase (PCC) complex is composed of three subunits: PccA (biotin carboxylase and biotin-carboxyl carrier), PccB (carboxyltransferase) and PccX.

It catalyses the reaction propanoyl-CoA + hydrogencarbonate + ATP = (S)-methylmalonyl-CoA + ADP + phosphate + H(+). Its pathway is metabolic intermediate metabolism; propanoyl-CoA degradation; succinyl-CoA from propanoyl-CoA: step 1/3. Functionally, part of the propionyl coenzyme A carboxylase (PCC) complex involved in propionate utilization and in the production of the poly(3-hydroxybutyrate-co-3-hydroxyvalerate)(PHBV), which is a water-insoluble biopolymer used as intracellular energy reserve material when cells grow under conditions of nutrient limitation. The complex catalyzes the carboxylation of propionyl-CoA to methylmalonyl-CoA. PCC is also able to catalyze the carboxylation of acetyl-CoA. The chain is Propionyl-CoA carboxylase, carboxyltransferase subunit from Haloferax mediterranei (strain ATCC 33500 / DSM 1411 / JCM 8866 / NBRC 14739 / NCIMB 2177 / R-4) (Halobacterium mediterranei).